We begin with the raw amino-acid sequence, 259 residues long: uncharacterized protein (259 aa).

Belongs to the BtpA family.

This is an uncharacterized protein from Pyrococcus abyssi (strain GE5 / Orsay).